The chain runs to 282 residues: Pantothenate synthetase (282 aa).

ATP is bound at residue 30–37 (MGALHRGH). His-37 functions as the Proton donor in the catalytic mechanism. Gln-61 lines the (R)-pantoate pocket. Beta-alanine is bound at residue Gln-61. 147 to 150 (GEKD) contributes to the ATP binding site. Residue Gln-153 participates in (R)-pantoate binding. ATP is bound at residue 184 to 187 (LSSR).

This sequence belongs to the pantothenate synthetase family. Homodimer.

The protein resides in the cytoplasm. It catalyses the reaction (R)-pantoate + beta-alanine + ATP = (R)-pantothenate + AMP + diphosphate + H(+). Its pathway is cofactor biosynthesis; (R)-pantothenate biosynthesis; (R)-pantothenate from (R)-pantoate and beta-alanine: step 1/1. In terms of biological role, catalyzes the condensation of pantoate with beta-alanine in an ATP-dependent reaction via a pantoyl-adenylate intermediate. The polypeptide is Pantothenate synthetase (Rhizorhabdus wittichii (strain DSM 6014 / CCUG 31198 / JCM 15750 / NBRC 105917 / EY 4224 / RW1) (Sphingomonas wittichii)).